The following is a 244-amino-acid chain: Sepiapterin reductase (244 aa).

NADP(+) contacts are provided by residues 9–15 (GAGKGIG), 40–42 (SRT), 66–67 (DI), and N93. F99 contacts substrate. T116 provides a ligand contact to NADP(+). Substrate is bound by residues S145 and Y158. NADP(+) contacts are provided by residues Y158, K162, and 191 to 196 (VYTPMW). Residue W196 participates in substrate binding.

The protein belongs to the short-chain dehydrogenases/reductases (SDR) family. In terms of assembly, homodimer.

It localises to the cytoplasm. It carries out the reaction L-threo-7,8-dihydrobiopterin + NADP(+) = L-sepiapterin + NADPH + H(+). It catalyses the reaction L-threo-tetrahydrobiopterin + 2 NADP(+) = 6-pyruvoyl-5,6,7,8-tetrahydropterin + 2 NADPH + 2 H(+). With respect to regulation, slightly inhibited by N-acetyldopamine but not by N-acetylserotonin or melatonin. Functionally, catalyzes the final reductions in tetra-hydrobiopterin biosynthesis to form 5,6,7,8-tetrahydrobiopterin. The protein is Sepiapterin reductase of Chlorobaculum tepidum (strain ATCC 49652 / DSM 12025 / NBRC 103806 / TLS) (Chlorobium tepidum).